The chain runs to 86 residues: Small ribosomal subunit protein bS20 (86 aa).

A compositionally biased stretch (polar residues) spans 1-11 (MANIKSQIKRN). The tract at residues 1 to 20 (MANIKSQIKRNLTNEKRHQA) is disordered.

The protein belongs to the bacterial ribosomal protein bS20 family.

Binds directly to 16S ribosomal RNA. The protein is Small ribosomal subunit protein bS20 of Acholeplasma laidlawii (strain PG-8A).